Here is a 318-residue protein sequence, read N- to C-terminus: uncharacterized protein (318 aa).

Residues 2 to 22 (ILELIIVLVLLVLAFKSLKIL) form a helical membrane-spanning segment. The disordered stretch occupies residues 295–318 (SDPEDKGVSEVETESQPAEKPEKH).

This sequence belongs to the band 7/mec-2 family.

The protein resides in the membrane. This is an uncharacterized protein from Methanothermobacter thermautotrophicus (strain ATCC 29096 / DSM 1053 / JCM 10044 / NBRC 100330 / Delta H) (Methanobacterium thermoautotrophicum).